A 251-amino-acid polypeptide reads, in one-letter code: Triosephosphate isomerase (251 aa).

9 to 11 (NWK) lines the substrate pocket. Histidine 94 serves as the catalytic Electrophile. Residue glutamate 166 is the Proton acceptor of the active site. Substrate-binding positions include glycine 172, serine 211, and 232–233 (GG).

The protein belongs to the triosephosphate isomerase family. In terms of assembly, homodimer.

It localises to the cytoplasm. The catalysed reaction is D-glyceraldehyde 3-phosphate = dihydroxyacetone phosphate. It functions in the pathway carbohydrate biosynthesis; gluconeogenesis. The protein operates within carbohydrate degradation; glycolysis; D-glyceraldehyde 3-phosphate from glycerone phosphate: step 1/1. In terms of biological role, involved in the gluconeogenesis. Catalyzes stereospecifically the conversion of dihydroxyacetone phosphate (DHAP) to D-glyceraldehyde-3-phosphate (G3P). This chain is Triosephosphate isomerase, found in Stenotrophomonas maltophilia (strain K279a).